A 115-amino-acid chain; its full sequence is U3-lycotoxin-Ls1a (115 aa).

Positions 1–20 (MKFVLLFGVFLVTLFSYSSA) are cleaved as a signal peptide. The propeptide occupies 21 to 44 (EMLDDFDQAAEDELLSLIEKEEAR). Intrachain disulfides connect C48–C63, C55–C72, C62–C87, and C74–C85.

Belongs to the neurotoxin 19 (CSTX) family. 01 subfamily. Expressed by the venom gland.

Its subcellular location is the secreted. This Lycosa singoriensis (Wolf spider) protein is U3-lycotoxin-Ls1a.